A 268-amino-acid chain; its full sequence is N-formylmaleamate deformylase (268 aa).

Residues 28–251 enclose the AB hydrolase-1 domain; sequence ALILVPGITS…NAGHMIPWDD (224 aa). Catalysis depends on charge relay system residues S101, E221, and H245.

It catalyses the reaction N-formylmaleamate + H2O = maleamate + formate + H(+). It functions in the pathway cofactor degradation; nicotinate degradation. In terms of biological role, deformylase that catalyzes the conversion of N-formylmaleamic acid to maleamate in the aerobic nicotinate degradation pathway. This is N-formylmaleamate deformylase (nicD) from Pseudomonas putida (strain ATCC 47054 / DSM 6125 / CFBP 8728 / NCIMB 11950 / KT2440).